Reading from the N-terminus, the 125-residue chain is Small ribosomal subunit protein eS8 (125 aa).

Belongs to the eukaryotic ribosomal protein eS8 family. As to quaternary structure, part of the 30S ribosomal subunit.

This is Small ribosomal subunit protein eS8 from Methanosarcina acetivorans (strain ATCC 35395 / DSM 2834 / JCM 12185 / C2A).